A 1449-amino-acid polypeptide reads, in one-letter code: ABC transporter G family member 21 (1449 aa).

The segment covering 1-10 (MEEYELREIA) has biased composition (basic and acidic residues). The segment at 1-49 (MEEYELREIALQEGGSNLDINTPPNYDNPVGDGSSPPDSPDIQKSENQF) is disordered. Polar residues predominate over residues 14 to 25 (GGSNLDINTPPN). Residues 130 to 383 (ISFFNLFKPS…FIDLGFDCEP (254 aa)) form the ABC transporter 1 domain. The ABC transmembrane type-2 1 domain maps to 488 to 731 (WGDKFSLISR…ILSVEGKDYL (244 aa)). Helical transmembrane passes span 519 to 539 (IPGL…NAFL), 577 to 597 (IPLT…MFGL), 602 to 622 (GKFF…TNLF), 634 to 654 (ISQN…GYTI), and 747 to 767 (FITY…MEYF). In terms of domain architecture, ABC transporter 2 spans 818 to 1062 (FTWQNINYTV…LTSYFERYGV (245 aa)). An ATP-binding site is contributed by 854–861 (GSSGAGKT). The region spanning 1152 to 1386 (FYTYGSFIQS…PISEPLTGYV (235 aa)) is the ABC transmembrane type-2 2 domain. 6 helical membrane passes run 1155–1175 (YGSF…FWSL), 1188–1208 (FIFE…PQFI), 1228–1248 (FAIS…TIFF), 1266–1286 (FYFW…GQAV), 1296–1316 (AHTL…VMVI), and 1423–1443 (LALI…FVYI).

The protein belongs to the ABC transporter superfamily. ABCG family. PDR (TC 3.A.1.205) subfamily.

The protein resides in the membrane. This Dictyostelium discoideum (Social amoeba) protein is ABC transporter G family member 21 (abcG21).